The following is a 387-amino-acid chain: TPR repeat-containing protein SYNPCC7002_A0425 (387 aa).

9 TPR repeats span residues 63–96 (LNAL…EANN), 97–130 (ARIH…EDDN), 132–164 (EFFN…QPNN), 166–198 (AYSL…DSNN), 200–232 (MALQ…RPND), 233–266 (AELR…STRD), 267–300 (SAMQ…DPQS), 302–334 (EAFA…SPTD), and 336–368 (AAFY…YQQR).

In Picosynechococcus sp. (strain ATCC 27264 / PCC 7002 / PR-6) (Agmenellum quadruplicatum), this protein is TPR repeat-containing protein SYNPCC7002_A0425.